The primary structure comprises 364 residues: MKTNLLNYDLQGLTRHFADMGEKPFRAKQVMRWMHQSGAQNFNEMTDLAKSLRHKLNEQAGIEIPKLMMSQKSSDGTRKWLLDVGTGNGVETVFIPESDRGTLCISSQVGCALECTFCSTGRQGFNRNLTAAEIIGQLWWANKAMGVTPKNERVISNVVMMGMGEPMANFDNVVTALSIMLDDHGYGLSRRRVTVSTSGMVPQMDRLRDVMPVALAVSLHASNDEVRNQIVPLNKKYPLKELMAACQRYLVKAPRDFITFEYVMLDGINDKAQHARELIELVKDVPCKFNLIPFNPFPNSGYERSSNENIRVFRDILQQAGFVVTVRKTRGDDIDAACGQLAGQVQDKTRRQQKWQQILIGQQG.

Glu-91 serves as the catalytic Proton acceptor. In terms of domain architecture, Radical SAM core spans 97–333 (ESDRGTLCIS…VTVRKTRGDD (237 aa)). Cys-104 and Cys-338 are disulfide-bonded. Positions 111, 115, and 118 each coordinate [4Fe-4S] cluster. Residues 164-165 (GE), Ser-196, 218-220 (SLH), and Asn-295 contribute to the S-adenosyl-L-methionine site. Cys-338 acts as the S-methylcysteine intermediate in catalysis.

It belongs to the radical SAM superfamily. RlmN family. [4Fe-4S] cluster is required as a cofactor.

It localises to the cytoplasm. It carries out the reaction adenosine(2503) in 23S rRNA + 2 reduced [2Fe-2S]-[ferredoxin] + 2 S-adenosyl-L-methionine = 2-methyladenosine(2503) in 23S rRNA + 5'-deoxyadenosine + L-methionine + 2 oxidized [2Fe-2S]-[ferredoxin] + S-adenosyl-L-homocysteine. The catalysed reaction is adenosine(37) in tRNA + 2 reduced [2Fe-2S]-[ferredoxin] + 2 S-adenosyl-L-methionine = 2-methyladenosine(37) in tRNA + 5'-deoxyadenosine + L-methionine + 2 oxidized [2Fe-2S]-[ferredoxin] + S-adenosyl-L-homocysteine. Specifically methylates position 2 of adenine 2503 in 23S rRNA and position 2 of adenine 37 in tRNAs. m2A2503 modification seems to play a crucial role in the proofreading step occurring at the peptidyl transferase center and thus would serve to optimize ribosomal fidelity. The polypeptide is Dual-specificity RNA methyltransferase RlmN (Neisseria meningitidis serogroup C / serotype 2a (strain ATCC 700532 / DSM 15464 / FAM18)).